A 181-amino-acid polypeptide reads, in one-letter code: Acireductone dioxygenase (181 aa).

Positions 97, 99, 103, and 141 each coordinate Fe(2+). Ni(2+) contacts are provided by H97, H99, E103, and H141.

It belongs to the acireductone dioxygenase (ARD) family. Monomer. It depends on Fe(2+) as a cofactor. Ni(2+) is required as a cofactor.

The catalysed reaction is 1,2-dihydroxy-5-(methylsulfanyl)pent-1-en-3-one + O2 = 3-(methylsulfanyl)propanoate + CO + formate + 2 H(+). The enzyme catalyses 1,2-dihydroxy-5-(methylsulfanyl)pent-1-en-3-one + O2 = 4-methylsulfanyl-2-oxobutanoate + formate + 2 H(+). It participates in amino-acid biosynthesis; L-methionine biosynthesis via salvage pathway; L-methionine from S-methyl-5-thio-alpha-D-ribose 1-phosphate: step 5/6. Catalyzes 2 different reactions between oxygen and the acireductone 1,2-dihydroxy-3-keto-5-methylthiopentene (DHK-MTPene) depending upon the metal bound in the active site. Fe-containing acireductone dioxygenase (Fe-ARD) produces formate and 2-keto-4-methylthiobutyrate (KMTB), the alpha-ketoacid precursor of methionine in the methionine recycle pathway. Ni-containing acireductone dioxygenase (Ni-ARD) produces methylthiopropionate, carbon monoxide and formate, and does not lie on the methionine recycle pathway. In Pseudomonas aeruginosa (strain UCBPP-PA14), this protein is Acireductone dioxygenase.